A 249-amino-acid polypeptide reads, in one-letter code: tRNA pseudouridine synthase A (249 aa).

Asp53 serves as the catalytic Nucleophile. Tyr111 is a substrate binding site.

It belongs to the tRNA pseudouridine synthase TruA family. As to quaternary structure, homodimer.

The enzyme catalyses uridine(38/39/40) in tRNA = pseudouridine(38/39/40) in tRNA. Formation of pseudouridine at positions 38, 39 and 40 in the anticodon stem and loop of transfer RNAs. The sequence is that of tRNA pseudouridine synthase A from Streptococcus pyogenes serotype M1.